Reading from the N-terminus, the 208-residue chain is Small ribosomal subunit protein uS4 (208 aa).

In terms of domain architecture, S4 RNA-binding spans 95 to 155 (TRLDALVLRA…AKSQTMVPFQ (61 aa)).

This sequence belongs to the universal ribosomal protein uS4 family. Part of the 30S ribosomal subunit. Contacts protein S5. The interaction surface between S4 and S5 is involved in control of translational fidelity.

Its function is as follows. One of the primary rRNA binding proteins, it binds directly to 16S rRNA where it nucleates assembly of the body of the 30S subunit. With S5 and S12 plays an important role in translational accuracy. This Bifidobacterium adolescentis (strain ATCC 15703 / DSM 20083 / NCTC 11814 / E194a) protein is Small ribosomal subunit protein uS4.